The chain runs to 452 residues: Bifunctional protein GlmU (452 aa).

The pyrophosphorylase stretch occupies residues 1 to 232 (MTARNSLTIV…EDEVRGINTK (232 aa)). UDP-N-acetyl-alpha-D-glucosamine-binding positions include 11–14 (LAAG), lysine 25, glutamine 78, and 83–84 (GT). Position 108 (aspartate 108) interacts with Mg(2+). UDP-N-acetyl-alpha-D-glucosamine contacts are provided by glycine 144, glutamate 158, asparagine 173, and asparagine 230. A Mg(2+)-binding site is contributed by asparagine 230. The tract at residues 233–253 (AQLAEAETVMQTRLRLAAMAA) is linker. The N-acetyltransferase stretch occupies residues 254 to 452 (GVTLIAPETV…KSRHRKPKAH (199 aa)). Positions 319 and 337 each coordinate UDP-N-acetyl-alpha-D-glucosamine. The Proton acceptor role is filled by histidine 349. Positions 352 and 363 each coordinate UDP-N-acetyl-alpha-D-glucosamine. Acetyl-CoA contacts are provided by residues alanine 366, 372 to 373 (NY), serine 391, serine 409, and arginine 426.

It in the N-terminal section; belongs to the N-acetylglucosamine-1-phosphate uridyltransferase family. The protein in the C-terminal section; belongs to the transferase hexapeptide repeat family. In terms of assembly, homotrimer. It depends on Mg(2+) as a cofactor.

The protein localises to the cytoplasm. The enzyme catalyses alpha-D-glucosamine 1-phosphate + acetyl-CoA = N-acetyl-alpha-D-glucosamine 1-phosphate + CoA + H(+). It catalyses the reaction N-acetyl-alpha-D-glucosamine 1-phosphate + UTP + H(+) = UDP-N-acetyl-alpha-D-glucosamine + diphosphate. Its pathway is nucleotide-sugar biosynthesis; UDP-N-acetyl-alpha-D-glucosamine biosynthesis; N-acetyl-alpha-D-glucosamine 1-phosphate from alpha-D-glucosamine 6-phosphate (route II): step 2/2. It participates in nucleotide-sugar biosynthesis; UDP-N-acetyl-alpha-D-glucosamine biosynthesis; UDP-N-acetyl-alpha-D-glucosamine from N-acetyl-alpha-D-glucosamine 1-phosphate: step 1/1. It functions in the pathway bacterial outer membrane biogenesis; LPS lipid A biosynthesis. Its function is as follows. Catalyzes the last two sequential reactions in the de novo biosynthetic pathway for UDP-N-acetylglucosamine (UDP-GlcNAc). The C-terminal domain catalyzes the transfer of acetyl group from acetyl coenzyme A to glucosamine-1-phosphate (GlcN-1-P) to produce N-acetylglucosamine-1-phosphate (GlcNAc-1-P), which is converted into UDP-GlcNAc by the transfer of uridine 5-monophosphate (from uridine 5-triphosphate), a reaction catalyzed by the N-terminal domain. This Rhodopseudomonas palustris (strain TIE-1) protein is Bifunctional protein GlmU.